The chain runs to 622 residues: MSLDISNYPLLALASTPEELRQLPQSALKQLSDELRQFLLTSVGISSGHFASGLGTVELTVALHYVYNTPFDRLIWDVGHQAYPHKILTGRRDKMHTIRQKNGLHPFPWREESQYDTFSVGHSSTSISAALGMAVTAEKEALGRKVVAVIGDGAITGGMAFEALNHAGDLHKDMLVVLNDNEMSISENVGALNNHLAKLMSGRLYTTIREGGKKVLKGMPVIKEMAKRTEEHLKGMVVPGTLFEELGFNYIGPIDGHDVNGLVETLSNMRDLKGPQFLHIMTKKGKGYEPAEKDPIGWHAVPKFDPTQFRKPATKPGLPTFSQVFGKWLCDIAAKDEKVLAITPAMREGSGMVEFSQRFPQQYFDAAIAEQHAVTLGAGFACEGYKAVVAIYSSFLQRGYDQLIHDVALQRLPVLFAIDRGGIVGADGATHQGAFDLSYMRCIPNMVIMAPSDENECRQMFYTGYCYNEGPSAVRYPRGSATGAEQIEEMTALPIGKGVMRRQGQKIAILNFGTTLAAALTAAESLNATVADMRFVKPLDEALLLELAASHDVLVTVEENAIMGGAGSGVLEFLASKNRLKPLLQIGIPDEFIKHGGPEEILSELGLDAAGIEGQIRAFIER.

Residues His-80 and 121–123 (GHS) each bind thiamine diphosphate. Asp-152 is a Mg(2+) binding site. Thiamine diphosphate contacts are provided by residues 153–154 (GA), Asn-181, Tyr-288, and Glu-370. Asn-181 contributes to the Mg(2+) binding site.

It belongs to the transketolase family. DXPS subfamily. As to quaternary structure, homodimer. It depends on Mg(2+) as a cofactor. Thiamine diphosphate serves as cofactor.

The catalysed reaction is D-glyceraldehyde 3-phosphate + pyruvate + H(+) = 1-deoxy-D-xylulose 5-phosphate + CO2. It functions in the pathway metabolic intermediate biosynthesis; 1-deoxy-D-xylulose 5-phosphate biosynthesis; 1-deoxy-D-xylulose 5-phosphate from D-glyceraldehyde 3-phosphate and pyruvate: step 1/1. Catalyzes the acyloin condensation reaction between C atoms 2 and 3 of pyruvate and glyceraldehyde 3-phosphate to yield 1-deoxy-D-xylulose-5-phosphate (DXP). The polypeptide is 1-deoxy-D-xylulose-5-phosphate synthase (Shewanella amazonensis (strain ATCC BAA-1098 / SB2B)).